The chain runs to 187 residues: UPF0301 protein KPN78578_33170 (187 aa).

Belongs to the UPF0301 (AlgH) family.

The chain is UPF0301 protein KPN78578_33170 from Klebsiella pneumoniae subsp. pneumoniae (strain ATCC 700721 / MGH 78578).